The sequence spans 393 residues: Interferon regulatory factor 9 (393 aa).

Residues 9 to 116 constitute a DNA-binding region (IRF tryptophan pentad repeat); sequence TRKLRNWVVE…EPYKVYQLLP (108 aa). 2 disordered regions span residues 120–151 and 163–202; these read VSGQ…AMQN and LNNE…APFQ. A Phosphoserine modification is found at S139.

This sequence belongs to the IRF family. Interacts with STAT2 in the cytoplasm. Forms the interferon-stimulated gene factor 3 complex (ISGF3) with the heterodimer STAT1:STAT2; upon stimulation. In terms of assembly, (Microbial infection) Interacts with measles virus V protein; this interaction prevents the binding of IRF9 to STAT2 and thereby the type I interferon signaling pathway. In terms of processing, (Microbial infection) Ubiquitinated by Herpes simplex virus 2 E3 ubiquitin ligase ICP22.

It localises to the cytoplasm. It is found in the nucleus. Transcription factor that plays an essential role in anti-viral immunity. It mediates signaling by type I IFNs (IFN-alpha and IFN-beta). Following type I IFN binding to cell surface receptors, Jak kinases (TYK2 and JAK1) are activated, leading to tyrosine phosphorylation of STAT1 and STAT2. IRF9/ISGF3G associates with the phosphorylated STAT1:STAT2 dimer to form a complex termed ISGF3 transcription factor, that enters the nucleus. ISGF3 binds to the IFN stimulated response element (ISRE) to activate the transcription of interferon stimulated genes, which drive the cell in an antiviral state. In Homo sapiens (Human), this protein is Interferon regulatory factor 9 (IRF9).